The primary structure comprises 288 residues: MSNLKQLRTRIKSVKSTQKITKAMQLVSASKLTKIKNQIAHSNFYVEAISKMMSTVLSADIYDFPIEAQKFFNTETNKANLLIVMTSERGLCGTFNYMIIKQVKSDVETLKSKGEKIKLIIIGKKGYEALKKPYESYIDSYFELPKNHDENLMLQIKQKIMALVANLEVSNCTIYFNRFKNAMTQSMTKQQILPIEKYHDDSKIEEANYEYEGENLIQNLINLYVNSQINYALLQNRASEEGSRMTAMENATNNAHDIINKLVLKLNRSRQAIITTELIEIIAGSEAV.

This sequence belongs to the ATPase gamma chain family. In terms of assembly, F-type ATPases have 2 components, CF(1) - the catalytic core - and CF(0) - the membrane proton channel. CF(1) has five subunits: alpha(3), beta(3), gamma(1), delta(1), epsilon(1). CF(0) has three main subunits: a, b and c.

The protein resides in the cell inner membrane. Its function is as follows. Produces ATP from ADP in the presence of a proton gradient across the membrane. The gamma chain is believed to be important in regulating ATPase activity and the flow of protons through the CF(0) complex. This Rickettsia bellii (strain RML369-C) protein is ATP synthase gamma chain.